A 509-amino-acid polypeptide reads, in one-letter code: Flotillin-like protein FloT (509 aa).

The Cytoplasmic portion of the chain corresponds to 1-3 (MTM). Residues 4 to 24 (PIIMIIGVVFFLLIALIAVFI) lie within the membrane without spanning it. The Cytoplasmic segment spans residues 25-509 (TKYRTAGPDE…KEAKTIQKSE (485 aa)). The interval 119-301 (AAEQFLGKSK…KIIERQKQIE (183 aa)) is PHB domain. The segment at 203-509 (RIAQVKRDAD…KEAKTIQKSE (307 aa)) is required for correct localization. 4 consecutive short sequence motifs (EA repeat) follow at residues 342-344 (AEA), 357-360 (AEAE), 370-373 (AEAE), and 390-394 (AEAEA). Residues 485–509 (KGNVKQSINELTNEIKEAKTIQKSE) are not required for correct localization.

It belongs to the band 7/mec-2 family. Flotillin subfamily. In terms of assembly, homooligomerizes. Oligomerizes in very large complexes in vitro. Interacts with FloA, FtsH, FtsX, OppA, SdhA and SecY in detergent-resistant membrane (DRM) fractions. Interacts with FtsH at midcell. Interacts with FloA. Interacts in vivo with KinC, FloA, FtsH and ResE. Interacts with ResE, colocalizes with ResE in FloT-only membrane rafts. Another study shows nearly complete colocalization with NfeD2, but only minor colocalization with FtsH or KinC.

The protein resides in the cell membrane. The protein localises to the membrane raft. In terms of biological role, found in functional membrane microdomains (FMM) that may be equivalent to eukaryotic membrane rafts. FMMs are highly dynamic and increase in number as cells age. FloA and FloT function is partially redundant; double deletions have marked synthetic phenotypes. Flotillins are thought to be important factors in membrane fluidity, especially during periods of rapid growth in rich media. Whether specific proteins are associated with FMMs is controversial; in one study FloT rafts have been shown to include proteins involved in adaptation to stationary phase, while FloA-FloT rafts include proteins involved in differentiation including sporulation, biofilm formation and DNA uptake competence. Another (more finely resolved) study only showed association of NfeD2 with FloT rafts of all the proteins examined. Aids homooligomerization of KinC and KinD but not KinB, may prevent incorrect hetero-association of the above kinases. Simultaneous overexpression of both FloA and FloT leads to defects in cell division and differentiation, in part caused by stabilization of FtsH and its subsequent increased ability to degrade proteins. Cells make more biofilm, are about half as long, have less EzrA and more frequent Z-rings. Involved in spatial organization of membranes, perhaps recruiting proteins (e.g. NfeD2) to specific membrane regions. Plays a role in phosphorylation of master regulator Spo0A, an early sporulation event. Plays a non-redundant role with dynamin-like protein A (dynA) in membrane dynamics and cell shape. This Bacillus subtilis (strain 168) protein is Flotillin-like protein FloT.